The primary structure comprises 368 residues: 3-dehydroquinate synthase (368 aa).

Residues 71 to 76 (DGEAFK), 105 to 109 (GVVGD), 129 to 130 (TT), K142, K151, and 169 to 172 (TLRT) contribute to the NAD(+) site. Residues E184, H247, and H264 each coordinate Zn(2+).

It belongs to the sugar phosphate cyclases superfamily. Dehydroquinate synthase family. It depends on Co(2+) as a cofactor. Zn(2+) is required as a cofactor. The cofactor is NAD(+).

It is found in the cytoplasm. The catalysed reaction is 7-phospho-2-dehydro-3-deoxy-D-arabino-heptonate = 3-dehydroquinate + phosphate. The protein operates within metabolic intermediate biosynthesis; chorismate biosynthesis; chorismate from D-erythrose 4-phosphate and phosphoenolpyruvate: step 2/7. Functionally, catalyzes the conversion of 3-deoxy-D-arabino-heptulosonate 7-phosphate (DAHP) to dehydroquinate (DHQ). This chain is 3-dehydroquinate synthase, found in Cupriavidus taiwanensis (strain DSM 17343 / BCRC 17206 / CCUG 44338 / CIP 107171 / LMG 19424 / R1) (Ralstonia taiwanensis (strain LMG 19424)).